A 268-amino-acid polypeptide reads, in one-letter code: Ribosomal RNA small subunit methyltransferase A (268 aa).

S-adenosyl-L-methionine is bound by residues asparagine 17, leucine 19, glycine 44, glutamate 65, aspartate 89, and asparagine 110.

It belongs to the class I-like SAM-binding methyltransferase superfamily. rRNA adenine N(6)-methyltransferase family. RsmA subfamily.

It is found in the cytoplasm. It catalyses the reaction adenosine(1518)/adenosine(1519) in 16S rRNA + 4 S-adenosyl-L-methionine = N(6)-dimethyladenosine(1518)/N(6)-dimethyladenosine(1519) in 16S rRNA + 4 S-adenosyl-L-homocysteine + 4 H(+). Specifically dimethylates two adjacent adenosines (A1518 and A1519) in the loop of a conserved hairpin near the 3'-end of 16S rRNA in the 30S particle. May play a critical role in biogenesis of 30S subunits. This is Ribosomal RNA small subunit methyltransferase A from Acidithiobacillus ferrooxidans (strain ATCC 53993 / BNL-5-31) (Leptospirillum ferrooxidans (ATCC 53993)).